We begin with the raw amino-acid sequence, 184 residues long: MRYEYVPLKDQYEKEIVPALMKEFNYKNIHQVPKLVKIVINMGIGEGSRNYDLIERHANELAKITGQKPIVTRARKSISNFKIRKGMPIGLKVTLRGARMYNFLYKLINIVLPKVRDFRGLDPNSFDGRGNYSFGLSEQLVFPELSPDEVRRIQGMDITIVTTAKTDQEARRLLELFGMPFKRG.

This sequence belongs to the universal ribosomal protein uL5 family. In terms of assembly, part of the 50S ribosomal subunit; part of the 5S rRNA/L5/L18/L25 subcomplex. Contacts the 5S rRNA and the P site tRNA. Forms a bridge to the 30S subunit in the 70S ribosome.

In terms of biological role, this is one of the proteins that bind and probably mediate the attachment of the 5S RNA into the large ribosomal subunit, where it forms part of the central protuberance. In the 70S ribosome it contacts protein S13 of the 30S subunit (bridge B1b), connecting the 2 subunits; this bridge is implicated in subunit movement. Contacts the P site tRNA; the 5S rRNA and some of its associated proteins might help stabilize positioning of ribosome-bound tRNAs. This chain is Large ribosomal subunit protein uL5, found in Thermotoga sp. (strain RQ2).